Consider the following 234-residue polypeptide: BTB/POZ domain-containing protein KCTD5 (234 aa).

Alanine 2 carries the post-translational modification N-acetylalanine. Phosphoserine is present on serine 10. In terms of domain architecture, BTB spans 44-146 (KWVRLNVGGT…LVKDKIRERD (103 aa)). Positions 213–234 (PYGTASEPSEKAKILQERGSRM) are disordered. The segment covering 220 to 234 (PSEKAKILQERGSRM) has biased composition (basic and acidic residues).

In terms of assembly, homopentamer. Interacts (via C-terminus) with GRASP55/GORASP2. Interacts with CUL3 and with ubiquitinated proteins. Interacts with CRY1. As to quaternary structure, (Microbial infection) Interacts with adeno-associated virus 2 (AAV-2) REP proteins.

It localises to the cytoplasm. Its subcellular location is the cytosol. It is found in the nucleus. Its interaction with CUL3 suggests that it may act as a substrate adapter in some E3 ligase complex. Does not affect the function of Kv channel Kv2.1/KCNB1, Kv1.2/KCNA2, Kv4.2/KCND2 and Kv3.4/KCNC4. The chain is BTB/POZ domain-containing protein KCTD5 (KCTD5) from Homo sapiens (Human).